The following is a 743-amino-acid chain: Putative cation exchanger C3A12.06c (743 aa).

Helical transmembrane passes span 13–33 (LILL…HRIS), 109–129 (FPVL…IGIS), 138–158 (LVTI…TFLA), 182–202 (IGEL…SVCL), 213–233 (FLRD…FVLH), 239–258 (IWQS…FVFF), 528–548 (LRLL…ITGG), 551–571 (LYIY…LYYY), 580–600 (FLPW…STIA), 609–629 (ALGV…FAAG), 649–669 (MAMG…IGIS), 690–710 (LSIT…YVPL), and 718–738 (VLGL…IVVE).

This sequence belongs to the Ca(2+):cation antiporter (CaCA) (TC 2.A.19) family.

Its subcellular location is the endoplasmic reticulum membrane. Functionally, putative cation exchanger. The protein is Putative cation exchanger C3A12.06c of Schizosaccharomyces pombe (strain 972 / ATCC 24843) (Fission yeast).